The sequence spans 467 residues: Protein CitXG (467 aa).

Positions 1 to 178 (MDYFEGGERL…NKMLHNFEKS (178 aa)) are apo-citrate lyase phosphoribosyl-dephospho-CoA transferase. The segment at 179–467 (KMIVPQMTQS…IFLARLVGSL (289 aa)) is 2-(5''-triphosphoribosyl)-3'-dephosphocoenzyme-A synthase.

The protein in the N-terminal section; belongs to the CitX family. It in the C-terminal section; belongs to the CitG/MdcB family.

The enzyme catalyses apo-[citrate lyase ACP] + 2'-(5''-triphospho-alpha-D-ribosyl)-3'-dephospho-CoA = holo-[citrate lyase ACP] + diphosphate. It carries out the reaction 3'-dephospho-CoA + ATP = 2'-(5''-triphospho-alpha-D-ribosyl)-3'-dephospho-CoA + adenine. In terms of biological role, bifunctional enzyme that catalyzes formation of 2-(5''-triphosphoribosyl)-3'-dephosphocoenzyme-A, and then the transfer of this prosthetic group precursor to the apo-acyl carrier protein (gamma chain) of the citrate lyase to yield the holo-acyl carrier protein. This Leuconostoc mesenteroides subsp. cremoris protein is Protein CitXG (citXG).